Here is a 485-residue protein sequence, read N- to C-terminus: Eukaryotic translation initiation factor 3 subunit E (485 aa).

The PCI domain occupies 219-391; the sequence is NQPDGPDGIV…GEIHITKPVT (173 aa). The segment at 444–485 is disordered; sequence QGGGKSNKKGDYKKGDYKKGGDFKKGGDFKKGGDHKKRAWVK. Residues 451–475 show a composition bias toward basic and acidic residues; the sequence is KKGDYKKGDYKKGGDFKKGGDFKKG. The segment covering 476–485 has biased composition (basic residues); the sequence is GDHKKRAWVK.

It belongs to the eIF-3 subunit E family. Component of the eukaryotic translation initiation factor 3 (eIF-3) complex.

It localises to the cytoplasm. Component of the eukaryotic translation initiation factor 3 (eIF-3) complex, which is involved in protein synthesis of a specialized repertoire of mRNAs and, together with other initiation factors, stimulates binding of mRNA and methionyl-tRNAi to the 40S ribosome. The eIF-3 complex specifically targets and initiates translation of a subset of mRNAs involved in cell proliferation. In Monosiga brevicollis (Choanoflagellate), this protein is Eukaryotic translation initiation factor 3 subunit E.